The sequence spans 298 residues: Protoheme IX farnesyltransferase (298 aa).

Helical transmembrane passes span 29 to 49 (LIVF…PPLL), 51 to 71 (FGVA…LNCL), 97 to 117 (ETVT…HGFI), 120 to 140 (LTMW…TLIL), 148 to 168 (IVIG…AMTG), 175 to 195 (LVLF…LACY), 221 to 241 (ILWY…LGMS), 243 to 263 (GFYL…AIAL), and 278 to 298 (YSIL…LIVL).

Belongs to the UbiA prenyltransferase family. Protoheme IX farnesyltransferase subfamily.

The protein localises to the cell inner membrane. It carries out the reaction heme b + (2E,6E)-farnesyl diphosphate + H2O = Fe(II)-heme o + diphosphate. The protein operates within porphyrin-containing compound metabolism; heme O biosynthesis; heme O from protoheme: step 1/1. Converts heme B (protoheme IX) to heme O by substitution of the vinyl group on carbon 2 of heme B porphyrin ring with a hydroxyethyl farnesyl side group. The protein is Protoheme IX farnesyltransferase of Dechloromonas aromatica (strain RCB).